Consider the following 394-residue polypeptide: Elongation factor Tu (394 aa).

The 195-residue stretch at 10–204 folds into the tr-type G domain; that stretch reads KPHVNVGTIG…AVDEWIPTPE (195 aa). The segment at 19 to 26 is G1; that stretch reads GHIDHGKT. Residue 19–26 participates in GTP binding; it reads GHIDHGKT. Position 26 (threonine 26) interacts with Mg(2+). The interval 60 to 64 is G2; sequence GITIN. The segment at 81-84 is G3; it reads DCPG. Residues 81–85 and 136–139 each bind GTP; these read DCPGH and NKCD. Positions 136–139 are G4; that stretch reads NKCD. The G5 stretch occupies residues 174 to 176; the sequence is SAL.

The protein belongs to the TRAFAC class translation factor GTPase superfamily. Classic translation factor GTPase family. EF-Tu/EF-1A subfamily. In terms of assembly, monomer.

It localises to the cytoplasm. It catalyses the reaction GTP + H2O = GDP + phosphate + H(+). Functionally, GTP hydrolase that promotes the GTP-dependent binding of aminoacyl-tRNA to the A-site of ribosomes during protein biosynthesis. In Mycoplasma pneumoniae (strain ATCC 29342 / M129 / Subtype 1) (Mycoplasmoides pneumoniae), this protein is Elongation factor Tu.